A 947-amino-acid chain; its full sequence is Bifunctional glutamine synthetase adenylyltransferase/adenylyl-removing enzyme (947 aa).

The tract at residues 1–440 (MTPLSSPLSQ…VFNELIGDDE (440 aa)) is adenylyl removase. The tract at residues 450–947 (SEPWREVWQD…ASWRKWLVAV (498 aa)) is adenylyl transferase.

Belongs to the GlnE family. It depends on Mg(2+) as a cofactor.

The catalysed reaction is [glutamine synthetase]-O(4)-(5'-adenylyl)-L-tyrosine + phosphate = [glutamine synthetase]-L-tyrosine + ADP. The enzyme catalyses [glutamine synthetase]-L-tyrosine + ATP = [glutamine synthetase]-O(4)-(5'-adenylyl)-L-tyrosine + diphosphate. Its function is as follows. Involved in the regulation of glutamine synthetase GlnA, a key enzyme in the process to assimilate ammonia. When cellular nitrogen levels are high, the C-terminal adenylyl transferase (AT) inactivates GlnA by covalent transfer of an adenylyl group from ATP to specific tyrosine residue of GlnA, thus reducing its activity. Conversely, when nitrogen levels are low, the N-terminal adenylyl removase (AR) activates GlnA by removing the adenylyl group by phosphorolysis, increasing its activity. The regulatory region of GlnE binds the signal transduction protein PII (GlnB) which indicates the nitrogen status of the cell. The chain is Bifunctional glutamine synthetase adenylyltransferase/adenylyl-removing enzyme from Salmonella paratyphi B (strain ATCC BAA-1250 / SPB7).